Reading from the N-terminus, the 208-residue chain is TnpB-like protein MJ0012 (208 aa).

Zn(2+)-binding residues include Cys-83, Cys-86, Cys-100, and Cys-103.

It belongs to the transposase 35 family.

The sequence is that of TnpB-like protein MJ0012 from Methanocaldococcus jannaschii (strain ATCC 43067 / DSM 2661 / JAL-1 / JCM 10045 / NBRC 100440) (Methanococcus jannaschii).